Reading from the N-terminus, the 114-residue chain is MGKVLVEAKGIGLRSTPSKLNLVADLIRGKDVSVAMMYLKFCKKKSAGYISKVLKSAVANAQANYNVDLDNLYVKEVLVGKSFSLRRVHARARGKACRVHKHYGNVIIKLFERI.

It belongs to the universal ribosomal protein uL22 family. In terms of assembly, part of the 50S ribosomal subunit.

This protein binds specifically to 23S rRNA; its binding is stimulated by other ribosomal proteins, e.g. L4, L17, and L20. It is important during the early stages of 50S assembly. It makes multiple contacts with different domains of the 23S rRNA in the assembled 50S subunit and ribosome. Its function is as follows. The globular domain of the protein is located near the polypeptide exit tunnel on the outside of the subunit, while an extended beta-hairpin is found that lines the wall of the exit tunnel in the center of the 70S ribosome. In Ehrlichia canis (strain Jake), this protein is Large ribosomal subunit protein uL22.